A 215-amino-acid chain; its full sequence is Large ribosomal subunit protein uL1 (215 aa).

Belongs to the universal ribosomal protein uL1 family. Part of the 50S ribosomal subunit.

Functionally, binds directly to 23S rRNA. Probably involved in E site tRNA release. In terms of biological role, protein L1 is also a translational repressor protein, it controls the translation of its operon by binding to its mRNA. In Archaeoglobus fulgidus (strain ATCC 49558 / DSM 4304 / JCM 9628 / NBRC 100126 / VC-16), this protein is Large ribosomal subunit protein uL1.